Here is a 124-residue protein sequence, read N- to C-terminus: Small ribosomal subunit protein uS12 (124 aa).

A disordered region spans residues 1 to 25; it reads MATINQLVRKPRQATTYKSASPALD. 3-methylthioaspartic acid is present on D89.

The protein belongs to the universal ribosomal protein uS12 family. As to quaternary structure, part of the 30S ribosomal subunit. Contacts proteins S8 and S17. May interact with IF1 in the 30S initiation complex.

Functionally, with S4 and S5 plays an important role in translational accuracy. Interacts with and stabilizes bases of the 16S rRNA that are involved in tRNA selection in the A site and with the mRNA backbone. Located at the interface of the 30S and 50S subunits, it traverses the body of the 30S subunit contacting proteins on the other side and probably holding the rRNA structure together. The combined cluster of proteins S8, S12 and S17 appears to hold together the shoulder and platform of the 30S subunit. This is Small ribosomal subunit protein uS12 from Xanthomonas campestris pv. campestris (strain 8004).